The chain runs to 324 residues: Glycerol-3-phosphate dehydrogenase [NAD(P)+] (324 aa).

Residues serine 10, phenylalanine 11, arginine 31, and lysine 106 each contribute to the NADPH site. The sn-glycerol 3-phosphate site is built by lysine 106, glycine 134, and serine 136. Alanine 138 serves as a coordination point for NADPH. Sn-glycerol 3-phosphate-binding residues include lysine 189, aspartate 244, serine 254, arginine 255, and asparagine 256. Catalysis depends on lysine 189, which acts as the Proton acceptor. Arginine 255 is a binding site for NADPH. Residues isoleucine 279 and glutamate 281 each coordinate NADPH.

This sequence belongs to the NAD-dependent glycerol-3-phosphate dehydrogenase family.

It is found in the cytoplasm. It catalyses the reaction sn-glycerol 3-phosphate + NAD(+) = dihydroxyacetone phosphate + NADH + H(+). It carries out the reaction sn-glycerol 3-phosphate + NADP(+) = dihydroxyacetone phosphate + NADPH + H(+). Its pathway is membrane lipid metabolism; glycerophospholipid metabolism. Its function is as follows. Catalyzes the reduction of the glycolytic intermediate dihydroxyacetone phosphate (DHAP) to sn-glycerol 3-phosphate (G3P), the key precursor for phospholipid synthesis. The sequence is that of Glycerol-3-phosphate dehydrogenase [NAD(P)+] from Ehrlichia canis (strain Jake).